Here is a 310-residue protein sequence, read N- to C-terminus: Protein CUP-SHAPED COTYLEDON 1 (310 aa).

Residues M20–K172 form the NAC domain. The DNA-binding element occupies L119–R178. 2 involved in transactivation activity regions span residues E179 to A210 and W306 to L310.

As to expression, expressed in inflorescence stems, rosette leaves, aerial parts of seedlings, flowers, floral buds and roots.

It localises to the nucleus. Transcription activator of STM and KNAT6. Involved in molecular mechanisms regulating shoot apical meristem (SAM) formation during embryogenesis and organ separation. Required for the fusion of septa of gynoecia along the length of the ovaries. Activates the shoot formation in callus in a STM-dependent manner. Seems to act as an inhibitor of cell division. In Arabidopsis thaliana (Mouse-ear cress), this protein is Protein CUP-SHAPED COTYLEDON 1 (NAC054).